Consider the following 262-residue polypeptide: MRIALCIEYDGAEYYGWQRQRDVNSVQEELEKALTIVANEPIEVHCAGRTDAGVHGTGQVVHFDTTSSRKLAAWMMGANANLPKNIAVRWAKEVNEDFHARFTATARRYRYIIYNNRLRPAILGHGVSHYHDALDANLMHEAGQYLLGENDFTSFRAVHCQSRSPWRNLMHLKVTRHGDFIVIDIKANAFVHHMVRNITGSLIEVGKGKQKPEWIKWLLEAKDRKLAGATAKAEGLYLVDVDYPLEWELPRVPLGPLFLDND.

The active-site Nucleophile is D51. Substrate is bound at residue Y109.

The protein belongs to the tRNA pseudouridine synthase TruA family. As to quaternary structure, homodimer.

It carries out the reaction uridine(38/39/40) in tRNA = pseudouridine(38/39/40) in tRNA. In terms of biological role, formation of pseudouridine at positions 38, 39 and 40 in the anticodon stem and loop of transfer RNAs. The protein is tRNA pseudouridine synthase A of Aliivibrio fischeri (strain ATCC 700601 / ES114) (Vibrio fischeri).